The following is a 411-amino-acid chain: NADH-quinone oxidoreductase subunit D 2 (411 aa).

It belongs to the complex I 49 kDa subunit family. As to quaternary structure, NDH-1 is composed of 14 different subunits. Subunits NuoB, C, D, E, F, and G constitute the peripheral sector of the complex.

It localises to the cell membrane. The catalysed reaction is a quinone + NADH + 5 H(+)(in) = a quinol + NAD(+) + 4 H(+)(out). NDH-1 shuttles electrons from NADH, via FMN and iron-sulfur (Fe-S) centers, to quinones in the respiratory chain. The immediate electron acceptor for the enzyme in this species is believed to be ubiquinone. Couples the redox reaction to proton translocation (for every two electrons transferred, four hydrogen ions are translocated across the cytoplasmic membrane), and thus conserves the redox energy in a proton gradient. In Chloroflexus aurantiacus (strain ATCC 29366 / DSM 635 / J-10-fl), this protein is NADH-quinone oxidoreductase subunit D 2.